Consider the following 219-residue polypeptide: Putative ankyrin repeat protein BB_0399 (219 aa).

3 ANK repeats span residues 104–133 (YKIS…SLNQ), 137–166 (TGYS…DLSF), and 170–199 (NRKT…YIDD).

The sequence is that of Putative ankyrin repeat protein BB_0399 from Borreliella burgdorferi (strain ATCC 35210 / DSM 4680 / CIP 102532 / B31) (Borrelia burgdorferi).